A 599-amino-acid polypeptide reads, in one-letter code: Elongation factor 4 (599 aa).

A tr-type G domain is found at 2–184; sequence KNIRNFSIIA…RLVRDIPPPQ (183 aa). GTP-binding positions include 14–19 and 131–134; these read DHGKST and NKID.

The protein belongs to the TRAFAC class translation factor GTPase superfamily. Classic translation factor GTPase family. LepA subfamily.

The protein resides in the cell inner membrane. It catalyses the reaction GTP + H2O = GDP + phosphate + H(+). In terms of biological role, required for accurate and efficient protein synthesis under certain stress conditions. May act as a fidelity factor of the translation reaction, by catalyzing a one-codon backward translocation of tRNAs on improperly translocated ribosomes. Back-translocation proceeds from a post-translocation (POST) complex to a pre-translocation (PRE) complex, thus giving elongation factor G a second chance to translocate the tRNAs correctly. Binds to ribosomes in a GTP-dependent manner. The protein is Elongation factor 4 of Salmonella arizonae (strain ATCC BAA-731 / CDC346-86 / RSK2980).